The following is a 492-amino-acid chain: MAPGGGRGSKTAGYGNSDFVVVANRLPVDQERLPDGSTAWKRSPGGLVTALEPLLRRQRGAWVGWPGIVDEDVDHEDDPIVQDDLELRPVKLSADDVAEYYEGFSNATLWPLYHDVIVKPIYHREWWDRYVAVNRRFAEATSRAAARGATVWVQDYQLQLVPAMLRELRPDLTIGFFLHIPFPPVELFMQLPWRTEIVKGLLGADLVGFHLTGGAQNFLFLSRRLIGANTSRGAVGMRSRYGEVELESRVVRVGAFPISIDSTALDQTARHRDIRRRAREIRAELGNPRKVLLGVDRLDYTKGIDVRLKAFSELLAEGRAKRDDTVLVQLATPSRERVDSYQQLRNDIERQVGHINGEYGEVGHPVVHYLHRPVPRNELIAFFVAADVMLVTPLRDGMNLVAKEYVACRSDLGGALVLSEFTGAAAELRQAYLVNPHDLEGVKDTVEAALNQSVEEGRRRMRSLRRQVLAHDVDRWARSFLDALAESGPRDG.

A D-glucose 6-phosphate-binding site is contributed by Arg-25. 45–46 (GG) contributes to the UDP-alpha-D-glucose binding site. Tyr-101 and Asp-155 together coordinate D-glucose 6-phosphate. Arg-297 and Lys-302 together coordinate UDP-alpha-D-glucose. Arg-335 provides a ligand contact to D-glucose 6-phosphate. 400-404 (LVAKE) provides a ligand contact to UDP-alpha-D-glucose.

This sequence belongs to the glycosyltransferase 20 family. As to quaternary structure, homotetramer.

The enzyme catalyses ADP-alpha-D-glucose + D-glucose 6-phosphate = alpha,alpha-trehalose 6-phosphate + ADP + H(+). It catalyses the reaction CDP-alpha-D-glucose + D-glucose 6-phosphate = alpha,alpha-trehalose 6-phosphate + CDP + H(+). The catalysed reaction is GDP-alpha-D-glucose + D-glucose 6-phosphate = alpha,alpha-trehalose 6-phosphate + GDP + H(+). It carries out the reaction TDP-alpha-D-glucose + D-glucose 6-phosphate = 5-methyl-UDP + alpha,alpha-trehalose 6-phosphate + H(+). The enzyme catalyses D-glucose 6-phosphate + UDP-alpha-D-glucose = alpha,alpha-trehalose 6-phosphate + UDP + H(+). It functions in the pathway glycan biosynthesis; trehalose biosynthesis. Functionally, probably involved in the osmoprotection via the biosynthesis of trehalose and in the production of glycogen and alpha-glucan via the TreS-Pep2 branch involved in the biosynthesis of maltose-1-phosphate (M1P). Catalyzes the transfer of glucose from UDP-glucose (UDP-Glc) to D-glucose 6-phosphate (Glc-6-P) to form trehalose-6-phosphate. Probably also able to use ADP-Glc, CDP-Glc, GDP-Glc and TDP-Glc as glucosyl donors. The protein is Trehalose-6-phosphate synthase of Mycolicibacterium paratuberculosis (strain ATCC BAA-968 / K-10) (Mycobacterium paratuberculosis).